The primary structure comprises 92 residues: Large ribosomal subunit protein eL43 (92 aa).

Residues 39–60 form a C4-type zinc finger; that stretch reads CSFCGKDSMKRAVVGIWSCKRC.

The protein belongs to the eukaryotic ribosomal protein eL43 family.

This Drosophila melanogaster (Fruit fly) protein is Large ribosomal subunit protein eL43 (RpL37A).